The sequence spans 1887 residues: DNA-directed RNA polymerase II subunit RPB1 (1887 aa).

Positions 67, 70, 77, 80, 107, 110, 150, and 176 each coordinate Zn(2+). A disordered region spans residues 156-178; the sequence is MDLTKENQQPDPNKKPGHGGCGH. Residues Asp487, Asp489, and Asp491 each contribute to the Mg(2+) site. A bridging helix region spans residues 825–837; that stretch reads PSEFYFHAMGGRE. Lys1260 is covalently cross-linked (Glycyl lysine isopeptide (Lys-Gly) (interchain with G-Cter in ubiquitin)). 2 disordered regions span residues 1528–1565 and 1579–1887; these read TPGGPSFSPSAASDASGMSPSWSPAHPGSSPSSPGPSM and YSPT…ESED. 3 stretches are compositionally biased toward low complexity: residues 1529–1565, 1579–1610, and 1626–1650; these read PGGPSFSPSAASDASGMSPSWSPAHPGSSPSSPGPSM, YSPTSPNYTASSPGGASPNYSPSSPNYSPTSP, and PQSTGYSPSSSGYSPTSPVYSPTVQ. Repeat 1 spans residues 1579–1585; that stretch reads YSPTSPN. Residues 1579-1881 form a C-terminal domain (CTD); 32 X 7 AA approximate tandem repeats of Y-[ST]-P-[STNVAPGN]-[STGMA]-[PSTR]-[SNAGCQKTLRIMH] region; it reads YSPTSPNYTA…SPAYSPSSPT (303 aa). The 2; approximate repeat unit spans residues 1586 to 1592; the sequence is YTASSPG. A run of 4 repeats spans residues 1598–1604, 1605–1611, 1631–1637, and 1638–1644. Residues 1651-1664 are compositionally biased toward polar residues; the sequence is FQSSPSFAGSGSNI. Residues 1665 to 1760 are compositionally biased toward low complexity; the sequence is YSPGNAYSPS…GVKYSPTSPT (96 aa). A run of 17 repeats spans residues 1671–1677, 1678–1684, 1685–1691, 1692–1698, 1699–1705, 1706–1712, 1713–1719, 1720–1726, 1727–1733, 1740–1746, 1754–1760, 1761–1767, 1777–1783, 1784–1790, 1791–1797, 1798–1804, and 1811–1817. The span at 1776–1786 shows a compositional bias: polar residues; that stretch reads QYTPGSPQYSP. A compositionally biased stretch (low complexity) spans 1788–1813; it reads SPKYSPTSPLYSPSSPQHSPSNQYSP. Polar residues predominate over residues 1814 to 1831; the sequence is TGSTYSATSPRYSPNMSI. One copy of the 24; approximate repeat lies at 1818 to 1824; the sequence is YSATSPR. 8 repeat units span residues 1825 to 1831, 1832 to 1838, 1839 to 1845, 1846 to 1852, 1853 to 1859, 1860 to 1866, 1868 to 1874, and 1875 to 1881. Over residues 1832-1849 the composition is skewed to low complexity; the sequence is YSPSSTKYSPTSPTYTPT. The segment covering 1850-1859 has biased composition (polar residues); the sequence is ARNYSPTSPM. The segment covering 1860-1881 has biased composition (low complexity); the sequence is YSPTAPSHYSPTSPAYSPSSPT.

It belongs to the RNA polymerase beta' chain family. In terms of assembly, component of the RNA polymerase II (Pol II) complex consisting of 12 subunits. Post-translationally, the tandem 7 residues repeats in the C-terminal domain (CTD) can be highly phosphorylated. The phosphorylation activates Pol II. Phosphorylation occurs mainly at residues 'Ser-2' and 'Ser-5' of the heptapeptide repeat. The phosphorylation state is believed to result from the balanced action of site-specific CTD kinases and phosphatase, and a 'CTD code' that specifies the position of Pol II within the transcription cycle has been proposed. In terms of processing, following transcription stress, the elongating form of RNA polymerase II (RNA pol IIo) is polyubiquitinated via 'Lys-63'-linkages on Lys-1260 at DNA damage sites without leading to degradation: ubiquitination promotes RNA pol IIo backtracking to allow access by the transcription-coupled nucleotide excision repair (TC-NER) machinery. Subsequent DEF1-dependent polyubiquitination by the elongin complex via 'Lys-48'-linkages may lead to proteasome-mediated degradation; presumably at stalled RNA pol II where TC-NER has failed, to halt global transcription and enable 'last resort' DNA repair pathways.

Its subcellular location is the nucleus. It carries out the reaction RNA(n) + a ribonucleoside 5'-triphosphate = RNA(n+1) + diphosphate. In terms of biological role, DNA-dependent RNA polymerase catalyzes the transcription of DNA into RNA using the four ribonucleoside triphosphates as substrates. Largest and catalytic component of RNA polymerase II which synthesizes mRNA precursors and many functional non-coding RNAs. Forms the polymerase active center together with the second largest subunit. Pol II is the central component of the basal RNA polymerase II transcription machinery. It is composed of mobile elements that move relative to each other. RPB1 is part of the core element with the central large cleft, the clamp element that moves to open and close the cleft and the jaws that are thought to grab the incoming DNA template. At the start of transcription, a single-stranded DNA template strand of the promoter is positioned within the central active site cleft of Pol II. A bridging helix emanates from RPB1 and crosses the cleft near the catalytic site and is thought to promote translocation of Pol II by acting as a ratchet that moves the RNA-DNA hybrid through the active site by switching from straight to bent conformations at each step of nucleotide addition. During transcription elongation, Pol II moves on the template as the transcript elongates. Elongation is influenced by the phosphorylation status of the C-terminal domain (CTD) of Pol II largest subunit (RPB1), which serves as a platform for assembly of factors that regulate transcription initiation, elongation, termination and mRNA processing. The chain is DNA-directed RNA polymerase II subunit RPB1 from Drosophila melanogaster (Fruit fly).